The primary structure comprises 242 residues: Large ribosomal subunit protein uL1 (242 aa).

This sequence belongs to the universal ribosomal protein uL1 family. As to quaternary structure, part of the 50S ribosomal subunit.

Functionally, binds directly to 23S rRNA. The L1 stalk is quite mobile in the ribosome, and is involved in E site tRNA release. Its function is as follows. Protein L1 is also a translational repressor protein, it controls the translation of the L11 operon by binding to its mRNA. This chain is Large ribosomal subunit protein uL1, found in Sulfurihydrogenibium sp. (strain YO3AOP1).